Here is a 474-residue protein sequence, read N- to C-terminus: Glycogen synthase (474 aa).

K12 is an ADP-alpha-D-glucose binding site.

It belongs to the glycosyltransferase 1 family. Bacterial/plant glycogen synthase subfamily.

The enzyme catalyses [(1-&gt;4)-alpha-D-glucosyl](n) + ADP-alpha-D-glucose = [(1-&gt;4)-alpha-D-glucosyl](n+1) + ADP + H(+). Its pathway is glycan biosynthesis; glycogen biosynthesis. In terms of biological role, synthesizes alpha-1,4-glucan chains using ADP-glucose. This chain is Glycogen synthase, found in Xanthomonas campestris pv. campestris (strain 8004).